A 600-amino-acid chain; its full sequence is UPF0588 membrane protein C20F10.02c (600 aa).

Helical transmembrane passes span 409 to 429 (LSAT…TSLV) and 437 to 457 (YHWL…SVLI).

Belongs to the UPF0588 family.

The protein resides in the membrane. The sequence is that of UPF0588 membrane protein C20F10.02c from Schizosaccharomyces pombe (strain 972 / ATCC 24843) (Fission yeast).